A 94-amino-acid chain; its full sequence is Small ribosomal subunit protein bS16 (94 aa).

Belongs to the bacterial ribosomal protein bS16 family.

This is Small ribosomal subunit protein bS16 from Thermosipho africanus (strain TCF52B).